Here is a 178-residue protein sequence, read N- to C-terminus: MIITIGGLPGTGTTTTSKLLSEKYGLKHVCAGFIFRDMAKEMNMTLQEFSSYAETNTEVDNEIDRRQVEAAQSGDLILEGRLAGWILKKSDIKPDLSIWLKADPMVRCVRISERENENVDLALEKMISREASEKKRYKEIYNIEIDDLSIYDLVIESSKWDANGVFNIIEKAIDNLKA.

ATP is bound at residue 7–15; that stretch reads GLPGTGTTT.

The protein belongs to the cytidylate kinase family. Type 2 subfamily.

The protein resides in the cytoplasm. It carries out the reaction CMP + ATP = CDP + ADP. The enzyme catalyses dCMP + ATP = dCDP + ADP. The polypeptide is Cytidylate kinase (Methanococcus maripaludis (strain C5 / ATCC BAA-1333)).